The sequence spans 369 residues: Anhydro-N-acetylmuramic acid kinase (369 aa).

Residue 12-19 (GTSMDGID) coordinates ATP.

The protein belongs to the anhydro-N-acetylmuramic acid kinase family.

It catalyses the reaction 1,6-anhydro-N-acetyl-beta-muramate + ATP + H2O = N-acetyl-D-muramate 6-phosphate + ADP + H(+). It functions in the pathway amino-sugar metabolism; 1,6-anhydro-N-acetylmuramate degradation. Its pathway is cell wall biogenesis; peptidoglycan recycling. In terms of biological role, catalyzes the specific phosphorylation of 1,6-anhydro-N-acetylmuramic acid (anhMurNAc) with the simultaneous cleavage of the 1,6-anhydro ring, generating MurNAc-6-P. Is required for the utilization of anhMurNAc either imported from the medium or derived from its own cell wall murein, and thus plays a role in cell wall recycling. The chain is Anhydro-N-acetylmuramic acid kinase from Shewanella sediminis (strain HAW-EB3).